The following is a 332-amino-acid chain: Arabinogalactan endo-beta-1,4-galactanase (332 aa).

N-linked (GlcNAc...) asparagine glycosylation is present at Asn111. Glu135 serves as the catalytic Proton donor. Glu245 functions as the Nucleophile in the catalytic mechanism.

Belongs to the glycosyl hydrolase 53 family.

The enzyme catalyses The enzyme specifically hydrolyzes (1-&gt;4)-beta-D-galactosidic linkages in type I arabinogalactans.. This chain is Arabinogalactan endo-beta-1,4-galactanase, found in Humicola insolens (Soft-rot fungus).